The sequence spans 239 residues: Sugar fermentation stimulation protein homolog (239 aa).

The protein belongs to the SfsA family.

This chain is Sugar fermentation stimulation protein homolog, found in Sinorhizobium medicae (strain WSM419) (Ensifer medicae).